The primary structure comprises 375 residues: Fasciculation and elongation protein zeta-2 (375 aa).

The tract at residues methionine 1–serine 42 is disordered. A phosphoserine mark is found at serine 130, serine 171, and serine 190. Residues threonine 156–aspartate 177 adopt a coiled-coil conformation. Positions glutamate 206–glycine 281 form a coiled coil. A disordered region spans residues glutamine 265 to arginine 297.

Belongs to the zygin family. Homodimer; disulfide-linked. May form heterodimers with FEZ1. Interacts with synaptotagmin.

Functionally, involved in axonal outgrowth and fasciculation. The chain is Fasciculation and elongation protein zeta-2 (Fez2) from Rattus norvegicus (Rat).